The chain runs to 201 residues: Probable nicotinate-nucleotide adenylyltransferase (201 aa).

This sequence belongs to the NadD family.

It catalyses the reaction nicotinate beta-D-ribonucleotide + ATP + H(+) = deamido-NAD(+) + diphosphate. Its pathway is cofactor biosynthesis; NAD(+) biosynthesis; deamido-NAD(+) from nicotinate D-ribonucleotide: step 1/1. Functionally, catalyzes the reversible adenylation of nicotinate mononucleotide (NaMN) to nicotinic acid adenine dinucleotide (NaAD). This is Probable nicotinate-nucleotide adenylyltransferase from Clostridium botulinum (strain Okra / Type B1).